The following is a 457-amino-acid chain: Acetylcholine receptor subunit alpha (457 aa).

An N-terminal signal peptide occupies residues 1–20 (MELTAVLLLLGLCSAGTVLG). The Extracellular segment spans residues 21–230 (SEHETRLVAK…ITYHFVMQRL (210 aa)). 2 disulfide bridges follow: Cys-148–Cys-162 and Cys-212–Cys-213. Asn-161 carries N-linked (GlcNAc...) asparagine glycosylation. A run of 3 helical transmembrane segments spans residues 231–255 (PLYF…VFYL), 263–281 (MTLS…LVIV), and 297–316 (YMLF…VIVI). Residues 317-428 (NTHHRSPSTH…WKYVAMVMDH (112 aa)) lie on the Cytoplasmic side of the membrane. Residues 429–447 (ILLGVFMLVCLIGTLAVFA) traverse the membrane as a helical segment.

This sequence belongs to the ligand-gated ion channel (TC 1.A.9) family. Acetylcholine receptor (TC 1.A.9.1) subfamily. Alpha-1/CHRNA1 sub-subfamily. As to quaternary structure, one of the alpha chains that assemble within the acetylcholine receptor, a pentamer of two alpha chains, a beta, a delta, and a gamma (in immature muscle) or epsilon (in mature muscle) chains. The muscle heteropentamer composed of alpha-1, beta-1, delta, epsilon subunits interacts with the alpha-conotoxin ImII.

It localises to the postsynaptic cell membrane. The protein resides in the cell membrane. The catalysed reaction is K(+)(in) = K(+)(out). The enzyme catalyses Na(+)(in) = Na(+)(out). Its function is as follows. Upon acetylcholine binding, the AChR responds by an extensive change in conformation that affects all subunits and leads to opening of an ion-conducting channel across the plasma membrane. The protein is Acetylcholine receptor subunit alpha (Chrna1) of Rattus norvegicus (Rat).